Reading from the N-terminus, the 288-residue chain is Bifunctional protein FolD (288 aa).

NADP(+) is bound by residues 171-173 (GRS), Ser196, and Thr237.

This sequence belongs to the tetrahydrofolate dehydrogenase/cyclohydrolase family. As to quaternary structure, homodimer.

It catalyses the reaction (6R)-5,10-methylene-5,6,7,8-tetrahydrofolate + NADP(+) = (6R)-5,10-methenyltetrahydrofolate + NADPH. The catalysed reaction is (6R)-5,10-methenyltetrahydrofolate + H2O = (6R)-10-formyltetrahydrofolate + H(+). It functions in the pathway one-carbon metabolism; tetrahydrofolate interconversion. Functionally, catalyzes the oxidation of 5,10-methylenetetrahydrofolate to 5,10-methenyltetrahydrofolate and then the hydrolysis of 5,10-methenyltetrahydrofolate to 10-formyltetrahydrofolate. The protein is Bifunctional protein FolD of Elusimicrobium minutum (strain Pei191).